A 445-amino-acid chain; its full sequence is Phosphoglucosamine mutase (445 aa).

S102 functions as the Phosphoserine intermediate in the catalytic mechanism. Mg(2+) contacts are provided by S102, D241, D243, and D245. The residue at position 102 (S102) is a Phosphoserine.

It belongs to the phosphohexose mutase family. Requires Mg(2+) as cofactor. In terms of processing, activated by phosphorylation.

It catalyses the reaction alpha-D-glucosamine 1-phosphate = D-glucosamine 6-phosphate. Catalyzes the conversion of glucosamine-6-phosphate to glucosamine-1-phosphate. This chain is Phosphoglucosamine mutase, found in Shewanella pealeana (strain ATCC 700345 / ANG-SQ1).